The sequence spans 792 residues: Ribonucleoside-diphosphate reductase large subunit (792 aa).

The ATP-cone domain maps to 1 to 92; sequence MHVIKRDGRQ…VSNLHKEAKK (92 aa). ATP-binding positions include 5 to 6, 11 to 17, Thr-53, and Asp-57; these read KR and ERVMFDK. Lys-17 is modified (N6-acetyllysine). Residues Ser-202 and Ser-217 each contribute to the GDP site. An intrachain disulfide couples Cys-218 to Cys-444. DTTP-binding positions include 226-228, Lys-243, Arg-256, and 263-264; these read DSI and AG. At Lys-376 the chain carries N6-acetyllysine. Ser-427 functions as the Proton acceptor in the catalytic mechanism. The Cysteine radical intermediate role is filled by Cys-429. GDP is bound by residues Glu-431 and 604-607; that span reads TAST. Glu-431 acts as the Proton acceptor in catalysis. Thr-751 bears the Phosphothreonine mark.

It belongs to the ribonucleoside diphosphate reductase large chain family. In terms of assembly, heterodimer of a large and a small subunit. Interacts with RRM2B. Interacts with AHCYL1 which inhibits its activity.

The protein localises to the cytoplasm. It catalyses the reaction a 2'-deoxyribonucleoside 5'-diphosphate + [thioredoxin]-disulfide + H2O = a ribonucleoside 5'-diphosphate + [thioredoxin]-dithiol. Under complex allosteric control mediated by deoxynucleoside triphosphates and ATP binding to separate specificity and activation sites on the M1 subunit. The type of nucleotide bound at the specificity site determines substrate preference. It seems probable that ATP makes the enzyme reduce CDP and UDP, dGTP favors ADP reduction and dTTP favors GDP reduction. Stimulated by ATP and inhibited by dATP binding to the activity site, the dATP inhibition is mediated by AHCYL1 which stabilizes dATP in the site. Functionally, provides the precursors necessary for DNA synthesis. Catalyzes the biosynthesis of deoxyribonucleotides from the corresponding ribonucleotides. The protein is Ribonucleoside-diphosphate reductase large subunit (RRM1) of Pongo abelii (Sumatran orangutan).